A 60-amino-acid chain; its full sequence is Ribosome biogenesis protein Nop10 (60 aa).

This sequence belongs to the NOP10 family.

Functionally, involved in ribosome biogenesis; more specifically in 18S rRNA pseudouridylation and in cleavage of pre-rRNA. This is Ribosome biogenesis protein Nop10 from Haloquadratum walsbyi (strain DSM 16790 / HBSQ001).